Here is a 165-residue protein sequence, read N- to C-terminus: Protein OPG091 (165 aa).

It belongs to the orthopoxvirus OPG091 family.

It is found in the virion. The protein resides in the host cytoplasm. Its function is as follows. Contributes to vaccinia virus virulence in mice but not to replication in cell culture. The protein is Protein OPG091 (OPG091) of Homo sapiens (Human).